We begin with the raw amino-acid sequence, 211 residues long: ATP-dependent Clp protease proteolytic subunit (211 aa).

Residue Ser-114 is the Nucleophile of the active site. The active site involves His-139.

Belongs to the peptidase S14 family. In terms of assembly, fourteen ClpP subunits assemble into 2 heptameric rings which stack back to back to give a disk-like structure with a central cavity, resembling the structure of eukaryotic proteasomes.

It is found in the cytoplasm. It catalyses the reaction Hydrolysis of proteins to small peptides in the presence of ATP and magnesium. alpha-casein is the usual test substrate. In the absence of ATP, only oligopeptides shorter than five residues are hydrolyzed (such as succinyl-Leu-Tyr-|-NHMec, and Leu-Tyr-Leu-|-Tyr-Trp, in which cleavage of the -Tyr-|-Leu- and -Tyr-|-Trp bonds also occurs).. In terms of biological role, cleaves peptides in various proteins in a process that requires ATP hydrolysis. Has a chymotrypsin-like activity. Plays a major role in the degradation of misfolded proteins. The chain is ATP-dependent Clp protease proteolytic subunit from Pseudomonas fluorescens (strain ATCC BAA-477 / NRRL B-23932 / Pf-5).